Reading from the N-terminus, the 146-residue chain is MLGWVITCHDDRAQEILDALEKKHGALLQCRAVNFWRGLSSNMLSRMMCDALHEADSGEGVIFLTDIAGAPPYRVASLLSHKHSRCEVISGVTLPLIEQMMACRETMTSSEFRERIVELGAPEVSSLWHQQQKNPPFVLKHNLYEY.

In terms of domain architecture, PTS EIIA type-4 spans 1 to 124 (MLGWVITCHD…RIVELGAPEV (124 aa)). The active-site Tele-phosphohistidine intermediate is the His-9.

It is found in the cytoplasm. Functionally, the phosphoenolpyruvate-dependent sugar phosphotransferase system (sugar PTS), a major carbohydrate active -transport system, catalyzes the phosphorylation of incoming sugar substrates concomitantly with their translocation across the cell membrane. The polypeptide is Putative phosphotransferase enzyme IIA component YadI (yadI) (Escherichia coli (strain K12)).